The primary structure comprises 1275 residues: Probable Rho-type GTPase-activating protein 2 (1275 aa).

Disordered stretches follow at residues 118 to 146, 213 to 238, 280 to 306, and 335 to 365; these read KYES…SPYE, NTKR…LKDS, SSFR…KDNN, and SSPR…SKSG. Residues 122–143 are compositionally biased toward polar residues; that stretch reads TDSFPSSQPSRANSPQSDSYSS. Composition is skewed to polar residues over residues 290 to 299 and 353 to 364; these read TPFNSDSNIS and PKHSTNNLSSKS. Ser-388 is subject to Phosphoserine. Disordered stretches follow at residues 390–466 and 539–561; these read IIEN…RSSF and FSKS…SNSK. 2 stretches are compositionally biased toward polar residues: residues 450–466 and 552–561; these read SLSL…RSSF and QVEKSTSNSK. The region spanning 719–836 is the PH domain; that stretch reads HAQKEGVLLK…WLRAILRQVP (118 aa). Over residues 957–971 the composition is skewed to basic and acidic residues; sequence ADTRRNQDAPEKHVP. 2 disordered regions span residues 957-988 and 1254-1275; these read ADTR…TDQS and NGAQ…NEFF. The Rho-GAP domain occupies 1065-1275; sequence LPLNEAVNIS…DDNGEDNEFF (211 aa). Positions 1260 to 1275 are enriched in acidic residues; it reads SDSDVSDDNGEDNEFF.

It localises to the nucleus. Functionally, GTPase-activating protein for Rho-type proteins. The sequence is that of Probable Rho-type GTPase-activating protein 2 (rga2) from Schizosaccharomyces pombe (strain 972 / ATCC 24843) (Fission yeast).